The following is a 693-amino-acid chain: Elongation factor G 1 (693 aa).

The region spanning 4–281 (NKLRNIGISA…AVTRFLPSPH (278 aa)) is the tr-type G domain. GTP contacts are provided by residues 13 to 20 (AHIDSGKT), 80 to 84 (DTPGH), and 134 to 137 (NKCD).

The protein belongs to the TRAFAC class translation factor GTPase superfamily. Classic translation factor GTPase family. EF-G/EF-2 subfamily.

It localises to the cytoplasm. Catalyzes the GTP-dependent ribosomal translocation step during translation elongation. During this step, the ribosome changes from the pre-translocational (PRE) to the post-translocational (POST) state as the newly formed A-site-bound peptidyl-tRNA and P-site-bound deacylated tRNA move to the P and E sites, respectively. Catalyzes the coordinated movement of the two tRNA molecules, the mRNA and conformational changes in the ribosome. In Borreliella afzelii (strain PKo) (Borrelia afzelii), this protein is Elongation factor G 1.